The chain runs to 237 residues: tRNA1(Val) (adenine(37)-N6)-methyltransferase (237 aa).

It belongs to the methyltransferase superfamily. tRNA (adenine-N(6)-)-methyltransferase family.

The protein resides in the cytoplasm. It catalyses the reaction adenosine(37) in tRNA1(Val) + S-adenosyl-L-methionine = N(6)-methyladenosine(37) in tRNA1(Val) + S-adenosyl-L-homocysteine + H(+). Specifically methylates the adenine in position 37 of tRNA(1)(Val) (anticodon cmo5UAC). This is tRNA1(Val) (adenine(37)-N6)-methyltransferase from Parabacteroides distasonis (strain ATCC 8503 / DSM 20701 / CIP 104284 / JCM 5825 / NCTC 11152).